The chain runs to 172 residues: S-ribosylhomocysteine lyase (172 aa).

Fe cation is bound by residues His-54, His-58, and Cys-128.

This sequence belongs to the LuxS family. Homodimer. It depends on Fe cation as a cofactor.

The enzyme catalyses S-(5-deoxy-D-ribos-5-yl)-L-homocysteine = (S)-4,5-dihydroxypentane-2,3-dione + L-homocysteine. Its function is as follows. Involved in the synthesis of autoinducer 2 (AI-2) which is secreted by bacteria and is used to communicate both the cell density and the metabolic potential of the environment. The regulation of gene expression in response to changes in cell density is called quorum sensing. Catalyzes the transformation of S-ribosylhomocysteine (RHC) to homocysteine (HC) and 4,5-dihydroxy-2,3-pentadione (DPD). The chain is S-ribosylhomocysteine lyase from Vibrio vulnificus (strain CMCP6).